A 215-amino-acid chain; its full sequence is Probable phosphoglycerate mutase GpmB (215 aa).

Substrate-binding positions include 8–15 (RHGETQWN), 21–22 (QG), Arg-58, Lys-60, 82–85 (ELDM), 104–105 (RR), and 151–152 (GI). His-9 acts as the Tele-phosphohistidine intermediate in catalysis. Glu-82 (proton donor/acceptor) is an active-site residue.

Belongs to the phosphoglycerate mutase family. GpmB subfamily.

The catalysed reaction is (2R)-2-phosphoglycerate = (2R)-3-phosphoglycerate. It participates in carbohydrate degradation; glycolysis; pyruvate from D-glyceraldehyde 3-phosphate: step 3/5. The polypeptide is Probable phosphoglycerate mutase GpmB (Salmonella paratyphi C (strain RKS4594)).